We begin with the raw amino-acid sequence, 428 residues long: Histidinol dehydrogenase (428 aa).

The NAD(+) site is built by Tyr-127, Gln-185, and Asn-208. Positions 234, 256, and 259 each coordinate substrate. 2 residues coordinate Zn(2+): Gln-256 and His-259. Active-site proton acceptor residues include Glu-323 and His-324. Positions 324, 357, 411, and 416 each coordinate substrate. Asp-357 is a Zn(2+) binding site. His-416 is a binding site for Zn(2+).

The protein belongs to the histidinol dehydrogenase family. Requires Zn(2+) as cofactor.

The catalysed reaction is L-histidinol + 2 NAD(+) + H2O = L-histidine + 2 NADH + 3 H(+). The protein operates within amino-acid biosynthesis; L-histidine biosynthesis; L-histidine from 5-phospho-alpha-D-ribose 1-diphosphate: step 9/9. Catalyzes the sequential NAD-dependent oxidations of L-histidinol to L-histidinaldehyde and then to L-histidine. This chain is Histidinol dehydrogenase, found in Mannheimia succiniciproducens (strain KCTC 0769BP / MBEL55E).